The sequence spans 963 residues: Importin-13 (963 aa).

20 HEAT repeats span residues 24-54, 56-88, 95-135, 142-179, 194-231, 236-268, 276-325, 330-372, 375-438, 440-476, 487-522, 524-558, 562-600, 603-648, 676-716, 720-754, 761-803, 815-845, 860-893, and 897-931; these read ESVE…QAQV, PQAW…KTSR, TDQY…LSMM, AVAD…EFQT, LAVE…SWVQ, LQDC…NAIS, VNTL…ALLD, WQSF…DDIL, EAEK…YEML, AELL…FQSI, VVPG…WLAD, PVMI…CREC, LPPY…LLSA, VEEI…SNLF, PVVV…VKTL, FAPM…VHIF, FPPI…ALKR, VKAV…TELL, EDGR…FALN, and FSLL…QQIL. The region spanning 45–111 is the Importin N-terminal domain; the sequence is AQKWLMQAQV…KAQLFTQITR (67 aa).

This sequence belongs to the importin beta family. Interacts with UBC9, RAN, RBM8A, eIF-1A and PAX6.

It is found in the cytoplasm. Its subcellular location is the nucleus. Its function is as follows. Functions in nuclear protein import as nuclear transport receptor. Serves as receptor for nuclear localization signals (NLS) in cargo substrates. Is thought to mediate docking of the importin/substrate complex to the nuclear pore complex (NPC) through binding to nucleoporin and the complex is subsequently translocated through the pore by an energy requiring, Ran-dependent mechanism. At the nucleoplasmic side of the NPC, Ran binds to the importin, the importin/substrate complex dissociates and importin is re-exported from the nucleus to the cytoplasm where GTP hydrolysis releases Ran. The directionality of nuclear import is thought to be conferred by an asymmetric distribution of the GTP- and GDP-bound forms of Ran between the cytoplasm and nucleus. Mediates the nuclear import of UBC9, the RBM8A/MAGOH complex, PAX6 and probably other members of the paired homeobox family. Also mediates nuclear export of eIF-1A, and the cytoplasmic release of eIF-1A is triggered by the loading of import substrates onto IPO13. The polypeptide is Importin-13 (IPO13) (Pongo abelii (Sumatran orangutan)).